Here is a 232-residue protein sequence, read N- to C-terminus: Y-linked testis-specific protein 1 (232 aa).

This sequence belongs to the SPIN/STSY family. In terms of tissue distribution, expressed in testis (at protein level).

The sequence is that of Y-linked testis-specific protein 1 (Ssty1) from Mus musculus (Mouse).